Here is a 420-residue protein sequence, read N- to C-terminus: Histidine--tRNA ligase (420 aa).

This sequence belongs to the class-II aminoacyl-tRNA synthetase family. Homodimer.

It is found in the cytoplasm. The enzyme catalyses tRNA(His) + L-histidine + ATP = L-histidyl-tRNA(His) + AMP + diphosphate + H(+). The sequence is that of Histidine--tRNA ligase (hisS) from Mycoplasmopsis pulmonis (strain UAB CTIP) (Mycoplasma pulmonis).